The following is a 218-amino-acid chain: Probable transaldolase (218 aa).

The Schiff-base intermediate with substrate role is filled by Lys87.

This sequence belongs to the transaldolase family. Type 3B subfamily.

Its subcellular location is the cytoplasm. The enzyme catalyses D-sedoheptulose 7-phosphate + D-glyceraldehyde 3-phosphate = D-erythrose 4-phosphate + beta-D-fructose 6-phosphate. It participates in carbohydrate degradation; pentose phosphate pathway; D-glyceraldehyde 3-phosphate and beta-D-fructose 6-phosphate from D-ribose 5-phosphate and D-xylulose 5-phosphate (non-oxidative stage): step 2/3. Transaldolase is important for the balance of metabolites in the pentose-phosphate pathway. This chain is Probable transaldolase, found in Parabacteroides distasonis (strain ATCC 8503 / DSM 20701 / CIP 104284 / JCM 5825 / NCTC 11152).